The chain runs to 322 residues: Gas vesicle protein L (322 aa).

A disordered region spans residues 1 to 85 (MTEQSSGSAT…SEQATVDWST (85 aa)). Over residues 17–36 (ETAKQETGRKNEQPEERTVT) the composition is skewed to basic and acidic residues. A compositionally biased stretch (polar residues) spans 45–57 (INTTTAESETGSE). Basic and acidic residues predominate over residues 58 to 72 (QESKAGSEQESKAGS). Polar residues predominate over residues 73 to 85 (EQESEQATVDWST).

This sequence belongs to the gas vesicle GvpF/GvpL family. In terms of assembly, gvpF to GvpM interact with each other in vitro, and may form multi-subunit complex(es). Interacts with GvpC, GvpN and GvpO.

The protein resides in the gas vesicle. Its function is as follows. Proteins GvpF to GvpM might be involved in nucleating gas vesicle formation. A minor component of the gas vesicle. Gas vesicles are small, hollow, gas filled protein structures that are found in several microbial planktonic microorganisms. They allow positioning of halobacteria at the optimal depth for growth in the poorly aerated, shallow brine pools of their habitat. In terms of biological role, expression of a 9.5 kb mc-vac DNA fragment containing 2 divergently transcribed regions (gvpD-gvpE-gvpF-gvpG-gvpH-gvpI-gvpJ-gvpK-gvpL-gvpM and gvpA-gvpC-gvpN-gvpO) allows H.volcanii to produce gas vesicles. The polypeptide is Gas vesicle protein L (Haloferax mediterranei (strain ATCC 33500 / DSM 1411 / JCM 8866 / NBRC 14739 / NCIMB 2177 / R-4) (Halobacterium mediterranei)).